Consider the following 193-residue polypeptide: Holliday junction branch migration complex subunit RuvA (193 aa).

Positions 1–63 (MIGKLTGTVT…ENINKLYGFE (63 aa)) are domain I. A domain II region spans residues 64–148 (CRKSQEVARM…GIASSTNVHI (85 aa)). The segment at 149-150 (AS) is flexible linker. Residues 150-193 (SEAVSALVKLGFQHKPSHKVVMEIMTKRPAIEIAELITLALKML) are domain III.

The protein belongs to the RuvA family. In terms of assembly, homotetramer. Forms an RuvA(8)-RuvB(12)-Holliday junction (HJ) complex. HJ DNA is sandwiched between 2 RuvA tetramers; dsDNA enters through RuvA and exits via RuvB. An RuvB hexamer assembles on each DNA strand where it exits the tetramer. Each RuvB hexamer is contacted by two RuvA subunits (via domain III) on 2 adjacent RuvB subunits; this complex drives branch migration. In the full resolvosome a probable DNA-RuvA(4)-RuvB(12)-RuvC(2) complex forms which resolves the HJ.

It is found in the cytoplasm. Its function is as follows. The RuvA-RuvB-RuvC complex processes Holliday junction (HJ) DNA during genetic recombination and DNA repair, while the RuvA-RuvB complex plays an important role in the rescue of blocked DNA replication forks via replication fork reversal (RFR). RuvA specifically binds to HJ cruciform DNA, conferring on it an open structure. The RuvB hexamer acts as an ATP-dependent pump, pulling dsDNA into and through the RuvAB complex. HJ branch migration allows RuvC to scan DNA until it finds its consensus sequence, where it cleaves and resolves the cruciform DNA. The chain is Holliday junction branch migration complex subunit RuvA from Neorickettsia sennetsu (strain ATCC VR-367 / Miyayama) (Ehrlichia sennetsu).